The primary structure comprises 148 residues: Receptor activity-modifying protein 1 (148 aa).

An N-terminal signal peptide occupies residues 1–26 (MARGLRGLPRRGLWLLLVNHLFLATA). 3 disulfide bridges follow: Cys27-Cys82, Cys40-Cys72, and Cys57-Cys104. Residues 27-118 (CQDTDHAALL…RALQDPPSSV (92 aa)) are Extracellular-facing. The chain crosses the membrane as a helical span at residues 119–140 (LCPFIVVPILATLLMTALVVWR). Residues 141–148 (SKRPEGIV) are Cytoplasmic-facing.

Belongs to the RAMP family. In terms of assembly, heterodimer of CALCRL and RAMP1; the interaction induces allosteric modulation of CALCRL function and CGRP1/CALCA and CGRP2/CALCB ligand specificity. Heterodimer of CALCR and RAMP1; interaction forms the AMYR1 receptor complex for amylin/IAPP and CGRP1/CALCA ligands.

The protein resides in the cell membrane. In terms of biological role, accessory protein that interacts with and modulates the function of G-protein coupled receptors including calcitonin gene-related peptide type 1 receptor (CALCRL) and calcitonin receptor (CALCR). Required for the transport of CALCRL to the plasma membrane. Together with CALCRL, form the receptor complex for the calcitonin gene-related peptides CGRP1/CALCA and CGRP2/CALCB. Together with CALCR, form the AMYR1 receptor complex for amylin/IAPP and CGRP1/CALCA. The protein is Receptor activity-modifying protein 1 (RAMP1) of Sus scrofa (Pig).